The chain runs to 490 residues: Cytochrome P450 2C54 (490 aa).

Ser127 carries the post-translational modification Phosphoserine. Lys252 and Lys375 each carry N6-acetyllysine. Residue Cys435 participates in heme binding.

The protein belongs to the cytochrome P450 family. Heme serves as cofactor. Expressed in liver.

The protein localises to the endoplasmic reticulum membrane. It is found in the microsome membrane. The enzyme catalyses an organic molecule + reduced [NADPH--hemoprotein reductase] + O2 = an alcohol + oxidized [NADPH--hemoprotein reductase] + H2O + H(+). In terms of biological role, metabolizes arachidonic acid mainly to 12-hydroxyeicosatetraenoic acid (HETE). The protein is Cytochrome P450 2C54 of Mus musculus (Mouse).